A 570-amino-acid polypeptide reads, in one-letter code: Formate--tetrahydrofolate ligase (570 aa).

65–72 (TPFGEGKT) is a binding site for ATP.

It belongs to the formate--tetrahydrofolate ligase family.

The enzyme catalyses (6S)-5,6,7,8-tetrahydrofolate + formate + ATP = (6R)-10-formyltetrahydrofolate + ADP + phosphate. It functions in the pathway one-carbon metabolism; tetrahydrofolate interconversion. The sequence is that of Formate--tetrahydrofolate ligase from Shewanella woodyi (strain ATCC 51908 / MS32).